We begin with the raw amino-acid sequence, 481 residues long: ATP synthase subunit beta, chloroplastic (481 aa).

Residue 162-169 participates in ATP binding; sequence GGAGVGKT.

The protein belongs to the ATPase alpha/beta chains family. As to quaternary structure, F-type ATPases have 2 components, CF(1) - the catalytic core - and CF(0) - the membrane proton channel. CF(1) has five subunits: alpha(3), beta(3), gamma(1), delta(1), epsilon(1). CF(0) has four main subunits: a(1), b(1), b'(1) and c(9-12).

Its subcellular location is the plastid. The protein localises to the chloroplast thylakoid membrane. The enzyme catalyses ATP + H2O + 4 H(+)(in) = ADP + phosphate + 5 H(+)(out). Produces ATP from ADP in the presence of a proton gradient across the membrane. The catalytic sites are hosted primarily by the beta subunits. The protein is ATP synthase subunit beta, chloroplastic of Chlorella vulgaris (Green alga).